A 160-amino-acid polypeptide reads, in one-letter code: Serine-protein kinase RsbW (160 aa).

It belongs to the anti-sigma-factor family.

It catalyses the reaction L-seryl-[protein] + ATP = O-phospho-L-seryl-[protein] + ADP + H(+). It carries out the reaction L-threonyl-[protein] + ATP = O-phospho-L-threonyl-[protein] + ADP + H(+). Its function is as follows. Negative regulator of sigma-B activity. Phosphorylates and inactivates its specific antagonist protein, RsbV. Upon phosphorylation of RsbV, RsbW is released and binds to sigma-B, thereby blocking its ability to form an RNA polymerase holoenzyme (E-sigma-B). The protein is Serine-protein kinase RsbW of Bacillus mycoides (strain KBAB4) (Bacillus weihenstephanensis).